The primary structure comprises 232 residues: Phosphatidylserine decarboxylase proenzyme (232 aa).

Residue Ser190 is the Schiff-base intermediate with substrate; via pyruvic acid of the active site. The residue at position 190 (Ser190) is a Pyruvic acid (Ser); by autocatalysis.

It belongs to the phosphatidylserine decarboxylase family. PSD-A subfamily. Heterodimer of a large membrane-associated beta subunit and a small pyruvoyl-containing alpha subunit. Pyruvate serves as cofactor. Post-translationally, is synthesized initially as an inactive proenzyme. Formation of the active enzyme involves a self-maturation process in which the active site pyruvoyl group is generated from an internal serine residue via an autocatalytic post-translational modification. Two non-identical subunits are generated from the proenzyme in this reaction, and the pyruvate is formed at the N-terminus of the alpha chain, which is derived from the carboxyl end of the proenzyme. The post-translation cleavage follows an unusual pathway, termed non-hydrolytic serinolysis, in which the side chain hydroxyl group of the serine supplies its oxygen atom to form the C-terminus of the beta chain, while the remainder of the serine residue undergoes an oxidative deamination to produce ammonia and the pyruvoyl prosthetic group on the alpha chain.

The protein localises to the cell membrane. The catalysed reaction is a 1,2-diacyl-sn-glycero-3-phospho-L-serine + H(+) = a 1,2-diacyl-sn-glycero-3-phosphoethanolamine + CO2. It functions in the pathway phospholipid metabolism; phosphatidylethanolamine biosynthesis; phosphatidylethanolamine from CDP-diacylglycerol: step 2/2. Catalyzes the formation of phosphatidylethanolamine (PtdEtn) from phosphatidylserine (PtdSer). The polypeptide is Phosphatidylserine decarboxylase proenzyme (Brucella anthropi (strain ATCC 49188 / DSM 6882 / CCUG 24695 / JCM 21032 / LMG 3331 / NBRC 15819 / NCTC 12168 / Alc 37) (Ochrobactrum anthropi)).